A 225-amino-acid chain; its full sequence is NAD(P)H-quinone oxidoreductase subunit K, chloroplastic (225 aa).

[4Fe-4S] cluster contacts are provided by Cys43, Cys44, Cys108, and Cys139.

The protein belongs to the complex I 20 kDa subunit family. NDH is composed of at least 16 different subunits, 5 of which are encoded in the nucleus. It depends on [4Fe-4S] cluster as a cofactor.

Its subcellular location is the plastid. It localises to the chloroplast thylakoid membrane. It carries out the reaction a plastoquinone + NADH + (n+1) H(+)(in) = a plastoquinol + NAD(+) + n H(+)(out). It catalyses the reaction a plastoquinone + NADPH + (n+1) H(+)(in) = a plastoquinol + NADP(+) + n H(+)(out). Functionally, NDH shuttles electrons from NAD(P)H:plastoquinone, via FMN and iron-sulfur (Fe-S) centers, to quinones in the photosynthetic chain and possibly in a chloroplast respiratory chain. The immediate electron acceptor for the enzyme in this species is believed to be plastoquinone. Couples the redox reaction to proton translocation, and thus conserves the redox energy in a proton gradient. The protein is NAD(P)H-quinone oxidoreductase subunit K, chloroplastic of Triticum aestivum (Wheat).